A 114-amino-acid polypeptide reads, in one-letter code: Putative small ubiquitin-related modifier 4 (114 aa).

The interval 1–20 is disordered; the sequence is MSTTSRVGSNEVKMEGQKRK. The Ubiquitin-like domain maps to 26–104; the sequence is THVTLKVKGQ…IDAMLCQQSG (79 aa). A Glycyl lysine isopeptide (Gly-Lys) (interchain with K-? in acceptor proteins) cross-link involves residue Gly-104.

It belongs to the ubiquitin family. SUMO subfamily. Interacts with SAE2, SCE1, SIZ1 and MMS21 Covalently attached to a number of proteins.

It localises to the nucleus. The protein resides in the cytoplasm. In terms of biological role, ubiquitin-like protein which can be covalently attached to target lysines as a monomer. Does not seem to be involved in protein degradation and may function as an antagonist of ubiquitin in the degradation process. The polypeptide is Putative small ubiquitin-related modifier 4 (SUMO4) (Arabidopsis thaliana (Mouse-ear cress)).